We begin with the raw amino-acid sequence, 154 residues long: MGSLSGLRLAAGSCFRLCERDVFSSLRLTRSSDLKRINGFCTKPQESPRAPSRTYNRVPLHKPTEWQKKILVWSGRFKKEDEIPETVSLEMLDTAKNKMRVKISYLMIALTVVGCICMVIEGKKAAQRHESLTSLNLEKKARLREEAAMKAKTE.

The required for proapoptotic activity stretch occupies residues 76–102; sequence RFKKEDEIPETVSLEMLDTAKNKMRVK. The helical transmembrane segment at 103–120 threads the bilayer; the sequence is ISYLMIALTVVGCICMVI.

The protein belongs to the UPF0389 family. In terms of assembly, interacts with HSP90AB1; HSP90AB1 is essential for FAM162A mitochondrial localization and pro-apoptotic activity. Interacts with VDAC2; the interaction is probably involved in inducing mitochondrial permeability transition.

The protein resides in the mitochondrion membrane. Functionally, proposed to be involved in regulation of apoptosis; the exact mechanism may differ between cell types/tissues. May be involved in hypoxia-induced cell death of transformed cells implicating cytochrome C release and caspase activation (such as CASP9) and inducing mitochondrial permeability transition. May be involved in hypoxia-induced cell death of neuronal cells probably by promoting release of AIFM1 from mitochondria to cytoplasm and its translocation to the nucleus; however, the involvement of caspases has been reported conflictingly. This chain is Protein FAM162A (FAM162A), found in Pongo abelii (Sumatran orangutan).